The chain runs to 858 residues: Ubiquitin carboxyl-terminal hydrolase 5 (858 aa).

Ala-2 is subject to N-acetylalanine. A disordered region spans residues 73 to 98 (LRRTRRPKEEDTSAGTGDPPRKKPTR). Lys-113 participates in a covalent cross-link: Glycyl lysine isopeptide (Lys-Gly) (interchain with G-Cter in SUMO). 2 positions are modified to phosphoserine: Ser-149 and Ser-156. A UBP-type; degenerate zinc finger spans residues 175–283 (QVSKHAFNLK…EHLSHFGIDM (109 aa)). The cysteines at positions 195 and 816 are disulfide-linked. Zn(2+)-binding residues include Cys-199 and Cys-202. Substrate is bound at residue Trp-209. Cys-219 contacts Zn(2+). Substrate is bound at residue 221–224 (RRYF). Position 232 (His-232) interacts with Zn(2+). Residues Tyr-259, Tyr-261, and Asp-264 each coordinate substrate. Thr-292 carries the phosphothreonine modification. Residues 326 to 856 (TGIRNLGNSC…LGYIYFYQRV (531 aa)) enclose the USP domain. Cys-335 functions as the Nucleophile in the catalytic mechanism. The residue at position 623 (Thr-623) is a Phosphothreonine. UBA domains are found at residues 654–695 (MLDE…VMSH) and 722–762 (PPPE…IFSH). Phosphoserine occurs at positions 779, 783, and 785. The Proton acceptor role is filled by His-818.

It belongs to the peptidase C19 family. In terms of assembly, homodimer. Interacts with TRIML1. In terms of processing, SUMOylated at Lys-113; SUMOylation affects the interaction with Cav3.2 channels. Post-translationally, ubiquitinated by SMURF1; leading to proteasomal degradation.

Its subcellular location is the cytoplasm. The protein localises to the stress granule. It is found in the nucleus. The enzyme catalyses Thiol-dependent hydrolysis of ester, thioester, amide, peptide and isopeptide bonds formed by the C-terminal Gly of ubiquitin (a 76-residue protein attached to proteins as an intracellular targeting signal).. Its function is as follows. Deubiquitinating enzyme that participates in a wide range of cellular processes by specifically cleaving isopeptide bonds between ubiquitin and substrate proteins or ubiquitin itself. Affects thereby important cellular signaling pathways such as NF-kappa-B, Wnt/beta-catenin, and cytokine production by regulating ubiquitin-dependent protein degradation. Participates in the activation of the Wnt signaling pathway by promoting FOXM1 deubiquitination and stabilization that induces the recruitment of beta-catenin to Wnt target gene promoter. Regulates the assembly and disassembly of heat-induced stress granules by mediating the hydrolysis of unanchored ubiquitin chains. Promotes lipopolysaccharide-induced apoptosis and inflammatory response by stabilizing the TXNIP protein. Affects T-cell biology by stabilizing the inhibitory receptor on T-cells PDC1. Acts as a negative regulator of autophagy by regulating ULK1 at both protein and mRNA levels. Acts also as a negative regulator of type I interferon production by simultaneously removing both 'Lys-48'-linked unanchored and 'Lys-63'-linked anchored polyubiquitin chains on the transcription factor IRF3. Modulates the stability of DNA mismatch repair protein MLH1 and counteracts the effect of the ubiquitin ligase UBR4. Upon activation by insulin, it gets phosphorylated through mTORC1-mediated phosphorylation to enhance YTHDF1 stability by removing 'Lys-11'-linked polyubiquitination. May also deubiquitinate other substrates such as the calcium channel CACNA1H. In Mus musculus (Mouse), this protein is Ubiquitin carboxyl-terminal hydrolase 5 (Usp5).